A 90-amino-acid chain; its full sequence is Small ribosomal subunit protein uS19 (90 aa).

The protein belongs to the universal ribosomal protein uS19 family.

Functionally, protein S19 forms a complex with S13 that binds strongly to the 16S ribosomal RNA. The polypeptide is Small ribosomal subunit protein uS19 (Mesomycoplasma hyopneumoniae (strain 232) (Mycoplasma hyopneumoniae)).